The sequence spans 336 residues: Serpentine receptor class beta-15 (336 aa).

The next 7 helical transmembrane spans lie at 24–44 (LFIH…FVIF), 57–77 (FLFS…AIIS), 109–129 (IFMS…FIAM), 142–162 (LGPI…FFIY), 186–206 (FTFF…NSYL), 237–257 (VFVV…IMIL), and 276–296 (GAFT…AVYL).

The protein belongs to the nematode receptor-like protein srb family.

It is found in the membrane. The polypeptide is Serpentine receptor class beta-15 (srb-15) (Caenorhabditis elegans).